A 482-amino-acid chain; its full sequence is O-acyltransferase ausP (482 aa).

Active-site proton acceptor residues include histidine 180 and aspartate 412.

It belongs to the plant acyltransferase family. As to quaternary structure, monomer.

The protein operates within secondary metabolite biosynthesis; terpenoid biosynthesis. O-acyltransferase; part of the gene cluster B that mediates the biosynthesis of the fungal meroterpenoid acetoxydehydroaustin. The first step of the pathway is the synthesis of 3,5-dimethylorsellinic acid by the polyketide synthase ausA. 3,5-dimethylorsellinic acid is then prenylated by the polyprenyl transferase ausN. Further epoxidation by the FAD-dependent monooxygenase ausM and cyclization by the probable terpene cyclase ausL lead to the formation of protoaustinoid A. Protoaustinoid A is then oxidized to spiro-lactone preaustinoid A3 by the combined action of the FAD-binding monooxygenases ausB and ausC, and the dioxygenase ausE. Acid-catalyzed keto-rearrangement and ring contraction of the tetraketide portion of preaustinoid A3 by ausJ lead to the formation of preaustinoid A4. The aldo-keto reductase ausK, with the help of ausH, is involved in the next step by transforming preaustinoid A4 into isoaustinone which is in turn hydroxylated by the P450 monooxygenase ausI to form austinolide. The cytochrome P450 monooxygenase ausG then modifies austinolide to austinol. Austinol is further acetylated to austin by the O-acetyltransferase ausP, which spontaneously changes to dehydroaustin. The cytochrome P450 monooxygenase then converts dehydroaustin is into 7-dehydrodehydroaustin. The hydroxylation catalyzed by ausR permits the second O-acetyltransferase ausQ to add an additional acetyl group to the molecule, leading to the formation of acetoxydehydroaustin. Due to genetic rearrangements of the clusters and the subsequent loss of some enzymes, the end product of the Penicillium brasilianum austinoid biosynthesis clusters is acetoxydehydroaustin. The protein is O-acyltransferase ausP of Penicillium brasilianum.